The chain runs to 293 residues: Bifunctional protein FolD (293 aa).

NADP(+) is bound by residues 165–167 (GRS), Ser190, and Ile231.

It belongs to the tetrahydrofolate dehydrogenase/cyclohydrolase family. Homodimer.

It carries out the reaction (6R)-5,10-methylene-5,6,7,8-tetrahydrofolate + NADP(+) = (6R)-5,10-methenyltetrahydrofolate + NADPH. The catalysed reaction is (6R)-5,10-methenyltetrahydrofolate + H2O = (6R)-10-formyltetrahydrofolate + H(+). It participates in one-carbon metabolism; tetrahydrofolate interconversion. Functionally, catalyzes the oxidation of 5,10-methylenetetrahydrofolate to 5,10-methenyltetrahydrofolate and then the hydrolysis of 5,10-methenyltetrahydrofolate to 10-formyltetrahydrofolate. The polypeptide is Bifunctional protein FolD (Parasynechococcus marenigrum (strain WH8102)).